A 196-amino-acid polypeptide reads, in one-letter code: Cell division protein SepF (196 aa).

Residues 16-81 (EDDEEFNEPA…KRAGSTFTKP (66 aa)) form a disordered region. The span at 56 to 69 (RPAQSTSKAQTQTA) shows a compositional bias: polar residues.

The protein belongs to the SepF family. In terms of assembly, homodimer. Interacts with FtsZ.

It is found in the cytoplasm. Its function is as follows. Cell division protein that is part of the divisome complex and is recruited early to the Z-ring. Probably stimulates Z-ring formation, perhaps through the cross-linking of FtsZ protofilaments. Its function overlaps with FtsA. The protein is Cell division protein SepF of Lactococcus lactis subsp. lactis (strain IL1403) (Streptococcus lactis).